The primary structure comprises 394 residues: Phosphoglycerate kinase (394 aa).

Residues 21 to 23 (DFN), Arg36, 59 to 62 (HLGR), Arg118, and Arg151 contribute to the substrate site. Position 183 is a phosphoserine (Ser183). Position 201 (Lys201) interacts with ATP. Thr299 carries the post-translational modification Phosphothreonine. Residues Glu323 and 350 to 353 (GGDS) each bind ATP.

This sequence belongs to the phosphoglycerate kinase family. Monomer.

The protein resides in the cytoplasm. The catalysed reaction is (2R)-3-phosphoglycerate + ATP = (2R)-3-phospho-glyceroyl phosphate + ADP. Its pathway is carbohydrate degradation; glycolysis; pyruvate from D-glyceraldehyde 3-phosphate: step 2/5. This Shouchella clausii (strain KSM-K16) (Alkalihalobacillus clausii) protein is Phosphoglycerate kinase.